We begin with the raw amino-acid sequence, 77 residues long: U10-lycotoxin-Ls1d (77 aa).

Residues 1-20 (MKLIIFTGLFLFAIVSLIEA) form the signal peptide. Residues 21–26 (EEESGR) constitute a propeptide that is removed on maturation.

This sequence belongs to the neurotoxin 19 (CSTX) family. 09 (U10-Lctx) subfamily. Post-translationally, contains 4 disulfide bonds. In terms of tissue distribution, expressed by the venom gland.

It localises to the secreted. This is U10-lycotoxin-Ls1d from Lycosa singoriensis (Wolf spider).